The primary structure comprises 509 residues: MNLINLILYFILFWIVFDFIRKNRRISFNDPPSPWALPIIGHLHKLSLNPHRSLTELAKVYGGVYSLHIGDSKTVVITDVSAFKDVTIKQFKNFANRPQPKSIRVITNFKGLAFADYDQWQKTRKLVSSALTKTKIKTFNNLIEKQTENLIESMNEFSNKNELFHPRKYLTKYSLNIILSMLFSKEIGKNESINKGTMERLTIPFNEAFKKVGKVDDFLWFLSPFFYFSNKQYKKYIFDIYYFMEEIYDQHLLDLDYNEPKDLLDQLIIASQGREKETVILVGMDFLLAGSDTQKATQEWFCLYLINNPDVQKKAYQELISVVGKDCKFVTSNHIENCPYFISIIKEVFRIRSPGPLGLPRISIDDTYLSNGMFIPKGTQILLNIFGMGNLLVSEPDQFKPERWINYKNQQQQKQQQQQQQVNNKNSIDSSESSNLEFFDDLEKVSNPFSLGPRNCVGMAIAKSSIYSVCSNILLNFELSSINNQIIDDNEVFGVSINPKEFSIKLTKR.

The chain crosses the membrane as a helical span at residues 1–21 (MNLINLILYFILFWIVFDFIR). Cys-456 serves as a coordination point for heme.

This sequence belongs to the cytochrome P450 family. Heme is required as a cofactor.

It localises to the membrane. The sequence is that of Probable cytochrome P450 519B1 (cyp519B1) from Dictyostelium discoideum (Social amoeba).